The following is a 196-amino-acid chain: Neurensin-1 (196 aa).

Helical transmembrane passes span 67-87 and 121-141; these read LISGTVFVILGLTVLAVGFLV and AVLFCIGGTSMAGCLLMSVFA.

This sequence belongs to the VMP family. Expressed predominantly in brain. Also weakly expressed in lung and spleen. In brain, expressed strongly in nerve fibers of the cerebral cortex, anterior cerebral nuclei, hypothalamus, amygdaloid complex, brain stem of the metaencephalon and medulla oblongata, and moderately expressed in soma of neurons of the dentate gyrus of the hippocampus and Purkinje cells of the cerebellum.

The protein resides in the membrane. The protein localises to the cell projection. It localises to the neuron projection. In terms of biological role, may play an important role in neural organelle transport, and in transduction of nerve signals or in nerve growth. May play a role in neurite extension. The sequence is that of Neurensin-1 from Mus musculus (Mouse).